The chain runs to 295 residues: Indole-3-glycerol phosphate synthase (295 aa).

Belongs to the TrpC family.

It catalyses the reaction 1-(2-carboxyphenylamino)-1-deoxy-D-ribulose 5-phosphate + H(+) = (1S,2R)-1-C-(indol-3-yl)glycerol 3-phosphate + CO2 + H2O. It functions in the pathway amino-acid biosynthesis; L-tryptophan biosynthesis; L-tryptophan from chorismate: step 4/5. This chain is Indole-3-glycerol phosphate synthase, found in Prochlorococcus marinus subsp. pastoris (strain CCMP1986 / NIES-2087 / MED4).